A 241-amino-acid chain; its full sequence is Zinc finger CCHC domain-containing protein 24 (241 aa).

A phosphoserine mark is found at serine 65 and serine 93. The CCHC-type zinc finger occupies tyrosine 132–glutamine 149.

The protein is Zinc finger CCHC domain-containing protein 24 (ZCCHC24) of Macaca fascicularis (Crab-eating macaque).